Here is a 150-residue protein sequence, read N- to C-terminus: Arginine repressor (150 aa).

Belongs to the ArgR family.

Its subcellular location is the cytoplasm. It functions in the pathway amino-acid biosynthesis; L-arginine biosynthesis [regulation]. In terms of biological role, regulates arginine biosynthesis genes. In Desulforudis audaxviator (strain MP104C), this protein is Arginine repressor.